Here is a 465-residue protein sequence, read N- to C-terminus: CCA-adding enzyme (465 aa).

2 residues coordinate ATP: Ser-63 and Lys-66. CTP is bound by residues Ser-63 and Lys-66. Glu-75, Asp-77, and Asp-127 together coordinate Mg(2+). Positions 149, 171, and 180 each coordinate ATP. CTP-binding residues include His-149, Lys-171, and Tyr-180.

It belongs to the tRNA nucleotidyltransferase/poly(A) polymerase family. Archaeal CCA-adding enzyme subfamily. In terms of assembly, homodimer. It depends on Mg(2+) as a cofactor.

The enzyme catalyses a tRNA precursor + 2 CTP + ATP = a tRNA with a 3' CCA end + 3 diphosphate. It catalyses the reaction a tRNA with a 3' CCA end + 2 CTP + ATP = a tRNA with a 3' CCACCA end + 3 diphosphate. Catalyzes the addition and repair of the essential 3'-terminal CCA sequence in tRNAs without using a nucleic acid template. Adds these three nucleotides in the order of C, C, and A to the tRNA nucleotide-73, using CTP and ATP as substrates and producing inorganic pyrophosphate. tRNA 3'-terminal CCA addition is required both for tRNA processing and repair. Also involved in tRNA surveillance by mediating tandem CCA addition to generate a CCACCA at the 3' terminus of unstable tRNAs. While stable tRNAs receive only 3'-terminal CCA, unstable tRNAs are marked with CCACCA and rapidly degraded. The polypeptide is CCA-adding enzyme (Aeropyrum pernix (strain ATCC 700893 / DSM 11879 / JCM 9820 / NBRC 100138 / K1)).